The following is a 206-amino-acid chain: MELNVKTLEGKDAGKVSLSDAIFGLEPREDIIARVIRWQLAKKRQGTHKAQGRAEVSRTGAKMYKQKGTGRARHHSARAPQFRGGGKAHGPVVRSHEHDLPKKVRALGLRLALSAKLKAEDVIILDNLVAADAKTKALAGAFETLGLTNALFIGGAELDSNFKLAAANIPNIDVLPVQGINVYDILRRGKLVLSKAAVEALEERFK.

Residues 63–97 (MYKQKGTGRARHHSARAPQFRGGGKAHGPVVRSHE) are disordered. Residues 64–77 (YKQKGTGRARHHSA) show a composition bias toward basic residues.

It belongs to the universal ribosomal protein uL4 family. In terms of assembly, part of the 50S ribosomal subunit.

Its function is as follows. One of the primary rRNA binding proteins, this protein initially binds near the 5'-end of the 23S rRNA. It is important during the early stages of 50S assembly. It makes multiple contacts with different domains of the 23S rRNA in the assembled 50S subunit and ribosome. Functionally, forms part of the polypeptide exit tunnel. This Rhizobium rhizogenes (strain K84 / ATCC BAA-868) (Agrobacterium radiobacter) protein is Large ribosomal subunit protein uL4.